Here is a 182-residue protein sequence, read N- to C-terminus: UPF0397 protein BCQ_2505 (182 aa).

Helical transmembrane passes span 9–29 (VVAI…GFSI), 40–60 (AILT…IGLI), 71–91 (WGIW…MGFI), 114–134 (ITGL…DIIV), and 142–162 (IVIQ…VLGL).

The protein belongs to the UPF0397 family.

The protein localises to the cell membrane. This is UPF0397 protein BCQ_2505 from Bacillus cereus (strain Q1).